We begin with the raw amino-acid sequence, 349 residues long: Hydroxymethylglutaryl-CoA synthase (349 aa).

Residues D30 and A31 each coordinate (3S)-3-hydroxy-3-methylglutaryl-CoA. Catalysis depends on E82, which acts as the Proton donor/acceptor. Residues C114 and T155 each contribute to the (3S)-3-hydroxy-3-methylglutaryl-CoA site. The active-site Acyl-thioester intermediate is C114. R203 lines the CoA pocket. (3S)-3-hydroxy-3-methylglutaryl-CoA-binding residues include T205 and H238. Residue H238 is the Proton donor/acceptor of the active site. Position 243 (K243) interacts with CoA. Positions 270 and 300 each coordinate (3S)-3-hydroxy-3-methylglutaryl-CoA.

Belongs to the thiolase-like superfamily. Archaeal HMG-CoA synthase family. As to quaternary structure, interacts with acetoacetyl-CoA thiolase that catalyzes the precedent step in the pathway and with a DUF35 protein. The acetoacetyl-CoA thiolase/HMG-CoA synthase complex channels the intermediate via a fused CoA-binding site, which allows for efficient coupling of the endergonic thiolase reaction with the exergonic HMGCS reaction.

The enzyme catalyses acetoacetyl-CoA + acetyl-CoA + H2O = (3S)-3-hydroxy-3-methylglutaryl-CoA + CoA + H(+). It participates in metabolic intermediate biosynthesis; (R)-mevalonate biosynthesis; (R)-mevalonate from acetyl-CoA: step 2/3. In terms of biological role, catalyzes the condensation of acetyl-CoA with acetoacetyl-CoA to form 3-hydroxy-3-methylglutaryl-CoA (HMG-CoA). Functions in the mevalonate (MVA) pathway leading to isopentenyl diphosphate (IPP), a key precursor for the biosynthesis of isoprenoid compounds that are building blocks of archaeal membrane lipids. The sequence is that of Hydroxymethylglutaryl-CoA synthase from Methanococcus vannielii (strain ATCC 35089 / DSM 1224 / JCM 13029 / OCM 148 / SB).